A 286-amino-acid polypeptide reads, in one-letter code: Fructose-bisphosphate aldolase (286 aa).

Ser50 serves as a coordination point for D-glyceraldehyde 3-phosphate. The Proton donor role is filled by Asp85. 4 residues coordinate Zn(2+): His86, Asp107, Glu137, and His181. Residue Gly182 participates in dihydroxyacetone phosphate binding. Position 209 (His209) interacts with Zn(2+). Dihydroxyacetone phosphate is bound by residues Gly210–Thr212 and Asn231–Thr234.

The protein belongs to the class II fructose-bisphosphate aldolase family. Requires Zn(2+) as cofactor.

It carries out the reaction beta-D-fructose 1,6-bisphosphate = D-glyceraldehyde 3-phosphate + dihydroxyacetone phosphate. Its pathway is carbohydrate degradation; glycolysis; D-glyceraldehyde 3-phosphate and glycerone phosphate from D-glucose: step 4/4. In terms of biological role, catalyzes the aldol condensation of dihydroxyacetone phosphate (DHAP or glycerone-phosphate) with glyceraldehyde 3-phosphate (G3P) to form fructose 1,6-bisphosphate (FBP) in gluconeogenesis and the reverse reaction in glycolysis. The chain is Fructose-bisphosphate aldolase (fba) from Staphylococcus epidermidis (strain ATCC 35984 / DSM 28319 / BCRC 17069 / CCUG 31568 / BM 3577 / RP62A).